A 433-amino-acid chain; its full sequence is Adenosylhomocysteinase A (433 aa).

Substrate contacts are provided by Thr-57, Asp-132, Glu-157, Lys-187, and Asp-191. An NAD binding region spans residues 184-351 (SVTKSKFDNL…EGRLVNLGCA (168 aa)).

The protein belongs to the adenosylhomocysteinase family. In terms of assembly, homotetramer. NAD(+) serves as cofactor.

It localises to the cytoplasm. It catalyses the reaction S-adenosyl-L-homocysteine + H2O = L-homocysteine + adenosine. It participates in amino-acid biosynthesis; L-homocysteine biosynthesis; L-homocysteine from S-adenosyl-L-homocysteine: step 1/1. Functionally, catalyzes the hydrolysis of S-adenosyl-L-homocysteine to form adenosine and homocysteine. Binds copper ions. This chain is Adenosylhomocysteinase A (ahcy-a), found in Xenopus laevis (African clawed frog).